The sequence spans 598 residues: Elongation factor 4 (598 aa).

The 183-residue stretch at 2 to 184 (KNIRNFSIIA…EIVHKIPAPE (183 aa)) folds into the tr-type G domain. GTP contacts are provided by residues 14-19 (DHGKST) and 131-134 (NKID).

Belongs to the TRAFAC class translation factor GTPase superfamily. Classic translation factor GTPase family. LepA subfamily.

The protein localises to the cell inner membrane. The catalysed reaction is GTP + H2O = GDP + phosphate + H(+). Its function is as follows. Required for accurate and efficient protein synthesis under certain stress conditions. May act as a fidelity factor of the translation reaction, by catalyzing a one-codon backward translocation of tRNAs on improperly translocated ribosomes. Back-translocation proceeds from a post-translocation (POST) complex to a pre-translocation (PRE) complex, thus giving elongation factor G a second chance to translocate the tRNAs correctly. Binds to ribosomes in a GTP-dependent manner. In Pasteurella multocida (strain Pm70), this protein is Elongation factor 4.